The primary structure comprises 95 residues: MKFAHDILRKPLISEKSMSLTEGNKYTFIVDPRANKTEIKKAVEEIFKVKVLKVNTIRVKGKQVRRRNILGRKPETKKAVVTLRPGDKIEIFEGV.

The protein belongs to the universal ribosomal protein uL23 family. Part of the 50S ribosomal subunit. Contacts protein L29, and trigger factor when it is bound to the ribosome.

Functionally, one of the early assembly proteins it binds 23S rRNA. One of the proteins that surrounds the polypeptide exit tunnel on the outside of the ribosome. Forms the main docking site for trigger factor binding to the ribosome. The protein is Large ribosomal subunit protein uL23 of Desulforudis audaxviator (strain MP104C).